Consider the following 100-residue polypeptide: Cell division protein FtsB (100 aa).

Residues 1-3 (MKQ) lie on the Cytoplasmic side of the membrane. A helical transmembrane segment spans residues 4-21 (LIFLLICLLSLLQYRLWL). Residues 22–100 (GDNNLSEYVL…ELRERNPFNR (79 aa)) lie on the Periplasmic side of the membrane. The stretch at 49 to 73 (RNQILKEEIIDLKRGTEAIEERARN) forms a coiled coil.

Belongs to the FtsB family. Part of a complex composed of FtsB, FtsL and FtsQ.

It is found in the cell inner membrane. Its function is as follows. Essential cell division protein. May link together the upstream cell division proteins, which are predominantly cytoplasmic, with the downstream cell division proteins, which are predominantly periplasmic. This is Cell division protein FtsB from Shewanella frigidimarina (strain NCIMB 400).